The sequence spans 86 residues: Exopolysaccharide production repressor protein (86 aa).

The chain crosses the membrane as a helical span at residues 18–38; that stretch reads FAVTLAASVFLQVVYFLSLLF. The tract at residues 44–86 is disordered; it reads TRESDRSIHSGTRQADQPQKRDRDKTEQSNVPKLDPRRKRRTP. Basic and acidic residues predominate over residues 61–70; that stretch reads PQKRDRDKTE.

It localises to the cell membrane. It participates in glycan metabolism; exopolysaccharide biosynthesis. Its function is as follows. Inhibition of exopolysaccharide synthesis (EPS) and nodulation ability (NOD). This Rhizobium leguminosarum bv. phaseoli protein is Exopolysaccharide production repressor protein (exoX).